Consider the following 1167-residue polypeptide: ATP-dependent helicase/deoxyribonuclease subunit B (1167 aa).

The UvrD-like helicase ATP-binding domain maps to 1–359 (MSLRFLLGRS…IRQTEAYRDL (359 aa)). 8–15 (GRSGSGKT) serves as a coordination point for ATP. The UvrD-like helicase C-terminal domain occupies 282–588 (ANRRHEDRAL…EFSLVPPAMD (307 aa)). 4 residues coordinate [4Fe-4S] cluster: Cys-804, Cys-1126, Cys-1129, and Cys-1135.

The protein belongs to the helicase family. AddB/RexB type 1 subfamily. As to quaternary structure, heterodimer of AddA and AddB. Mg(2+) serves as cofactor. It depends on [4Fe-4S] cluster as a cofactor.

In terms of biological role, the heterodimer acts as both an ATP-dependent DNA helicase and an ATP-dependent, dual-direction single-stranded exonuclease. Recognizes the chi site generating a DNA molecule suitable for the initiation of homologous recombination. The AddB subunit has 5' -&gt; 3' nuclease activity but not helicase activity. This is ATP-dependent helicase/deoxyribonuclease subunit B from Geobacillus kaustophilus (strain HTA426).